Consider the following 204-residue polypeptide: Proteasome subunit beta type-3-A (204 aa).

It belongs to the peptidase T1B family. As to quaternary structure, component of the 20S core complex of the 26S proteasome. The 26S proteasome is composed of a core protease (CP), known as the 20S proteasome, capped at one or both ends by the 19S regulatory particle (RP/PA700). The 20S proteasome core is composed of 28 subunits that are arranged in four stacked rings, resulting in a barrel-shaped structure. The two end rings are each formed by seven alpha subunits, and the two central rings are each formed by seven beta subunits. The catalytic chamber with the active sites is on the inside of the barrel.

Its subcellular location is the cytoplasm. It is found in the nucleus. Its function is as follows. Non-catalytic component of the proteasome, a multicatalytic proteinase complex which is characterized by its ability to cleave peptides with Arg, Phe, Tyr, Leu, and Glu adjacent to the leaving group at neutral or slightly basic pH. The proteasome has an ATP-dependent proteolytic activity. The sequence is that of Proteasome subunit beta type-3-A (PBC1) from Arabidopsis thaliana (Mouse-ear cress).